The following is a 512-amino-acid chain: Alpha-amylase (512 aa).

The signal sequence occupies residues 1-15 (MKLFVLIALFGLGFA). Cystine bridges form between Cys-43-Cys-101, Cys-85-Cys-130, and Cys-156-Cys-175. Ca(2+) is bound by residues Asn-115, Arg-173, and Asp-182. Residue Arg-210 coordinates chloride. Catalysis depends on Asp-212, which acts as the Nucleophile. His-216 provides a ligand contact to Ca(2+). Glu-248 acts as the Proton donor in catalysis. Position 352 (Arg-352) interacts with chloride. Intrachain disulfides connect Cys-394-Cys-400 and Cys-466-Cys-478. Asn-496 is a glycosylation site (N-linked (GlcNAc...) asparagine).

This sequence belongs to the glycosyl hydrolase 13 family. Requires Ca(2+) as cofactor. Chloride serves as cofactor.

It is found in the secreted. The catalysed reaction is Endohydrolysis of (1-&gt;4)-alpha-D-glucosidic linkages in polysaccharides containing three or more (1-&gt;4)-alpha-linked D-glucose units.. Its function is as follows. Catalyzes the hydrolysis of alpha-1,4 glycosidic linkages in starch, glycogen and similar oligosaccharides. In Oryzias latipes (Japanese rice fish), this protein is Alpha-amylase.